Reading from the N-terminus, the 253-residue chain is tRNA pseudouridine synthase A (253 aa).

The active-site Nucleophile is the aspartate 51. Tyrosine 110 is a substrate binding site.

Belongs to the tRNA pseudouridine synthase TruA family. As to quaternary structure, homodimer.

It catalyses the reaction uridine(38/39/40) in tRNA = pseudouridine(38/39/40) in tRNA. Formation of pseudouridine at positions 38, 39 and 40 in the anticodon stem and loop of transfer RNAs. In Wolinella succinogenes (strain ATCC 29543 / DSM 1740 / CCUG 13145 / JCM 31913 / LMG 7466 / NCTC 11488 / FDC 602W) (Vibrio succinogenes), this protein is tRNA pseudouridine synthase A.